Here is a 348-residue protein sequence, read N- to C-terminus: Signal recognition particle receptor FtsY (348 aa).

GTP contacts are provided by residues 143–150 (GVNGVGKT), 225–229 (DTSGR), and 289–292 (TKMD).

The protein belongs to the GTP-binding SRP family. FtsY subfamily. Part of the signal recognition particle protein translocation system, which is composed of SRP and FtsY.

Its subcellular location is the cell membrane. The protein resides in the cytoplasm. The enzyme catalyses GTP + H2O = GDP + phosphate + H(+). In terms of biological role, involved in targeting and insertion of nascent membrane proteins into the cytoplasmic membrane. Acts as a receptor for the complex formed by the signal recognition particle (SRP) and the ribosome-nascent chain (RNC). This is Signal recognition particle receptor FtsY from Mycoplasma pneumoniae (strain ATCC 29342 / M129 / Subtype 1) (Mycoplasmoides pneumoniae).